Consider the following 72-residue polypeptide: Large ribosomal subunit protein bL28 (72 aa).

It belongs to the bacterial ribosomal protein bL28 family.

The sequence is that of Large ribosomal subunit protein bL28 from Chlorobaculum tepidum (strain ATCC 49652 / DSM 12025 / NBRC 103806 / TLS) (Chlorobium tepidum).